We begin with the raw amino-acid sequence, 554 residues long: Hydroxylamine reductase (554 aa).

The [2Fe-2S] cluster site is built by cysteine 3, cysteine 6, cysteine 18, and cysteine 25. Positions 252, 276, 320, 408, 436, 461, 495, and 497 each coordinate hybrid [4Fe-2O-2S] cluster. Cysteine 408 carries the cysteine persulfide modification.

It belongs to the HCP family. It depends on [2Fe-2S] cluster as a cofactor. Requires hybrid [4Fe-2O-2S] cluster as cofactor.

Its subcellular location is the cytoplasm. The enzyme catalyses A + NH4(+) + H2O = hydroxylamine + AH2 + H(+). Its function is as follows. Catalyzes the reduction of hydroxylamine to form NH(3) and H(2)O. This chain is Hydroxylamine reductase, found in Shewanella oneidensis (strain ATCC 700550 / JCM 31522 / CIP 106686 / LMG 19005 / NCIMB 14063 / MR-1).